Consider the following 110-residue polypeptide: Large ribosomal subunit protein uL22 (110 aa).

The protein belongs to the universal ribosomal protein uL22 family. In terms of assembly, part of the 50S ribosomal subunit.

Its function is as follows. This protein binds specifically to 23S rRNA; its binding is stimulated by other ribosomal proteins, e.g. L4, L17, and L20. It is important during the early stages of 50S assembly. It makes multiple contacts with different domains of the 23S rRNA in the assembled 50S subunit and ribosome. In terms of biological role, the globular domain of the protein is located near the polypeptide exit tunnel on the outside of the subunit, while an extended beta-hairpin is found that lines the wall of the exit tunnel in the center of the 70S ribosome. The sequence is that of Large ribosomal subunit protein uL22 from Vibrio parahaemolyticus serotype O3:K6 (strain RIMD 2210633).